Consider the following 277-residue polypeptide: Large ribosomal subunit protein uL2 (277 aa).

Residues 212–277 (RWRGKRPHVR…KFIVRGRKSK (66 aa)) form a disordered region. Residues 254 to 277 (TAGKKTRDKKKASTKFIVRGRKSK) show a composition bias toward basic residues.

The protein belongs to the universal ribosomal protein uL2 family. Part of the 50S ribosomal subunit. Forms a bridge to the 30S subunit in the 70S ribosome.

Functionally, one of the primary rRNA binding proteins. Required for association of the 30S and 50S subunits to form the 70S ribosome, for tRNA binding and peptide bond formation. It has been suggested to have peptidyltransferase activity; this is somewhat controversial. Makes several contacts with the 16S rRNA in the 70S ribosome. In Leuconostoc citreum (strain KM20), this protein is Large ribosomal subunit protein uL2.